Consider the following 120-residue polypeptide: Small ribosomal subunit protein uS13m (120 aa).

It belongs to the universal ribosomal protein uS13 family. Part of the small ribosomal subunit.

It is found in the mitochondrion. In terms of biological role, located at the top of the head of the small subunit, it contacts several helices of the 18S rRNA. The sequence is that of Small ribosomal subunit protein uS13m (RPS13) from Marchantia polymorpha (Common liverwort).